We begin with the raw amino-acid sequence, 505 residues long: Glycerol kinase 1 (505 aa).

Thr13 contacts ADP. Residues Thr13, Thr14, and Ser15 each contribute to the ATP site. Thr13 lines the sn-glycerol 3-phosphate pocket. ADP is bound at residue Arg17. Residues Arg83, Glu84, and Tyr135 each contribute to the sn-glycerol 3-phosphate site. Glycerol is bound by residues Arg83, Glu84, and Tyr135. Phosphohistidine; by HPr is present on His231. Asp245 is a sn-glycerol 3-phosphate binding site. Glycerol is bound by residues Asp245 and Gln246. ADP contacts are provided by Thr267 and Gly310. ATP contacts are provided by Thr267, Gly310, Gln314, and Gly411. ADP-binding residues include Gly411 and Asn415.

The protein belongs to the FGGY kinase family. As to quaternary structure, homotetramer and homodimer (in equilibrium). Post-translationally, the phosphoenolpyruvate-dependent sugar phosphotransferase system (PTS), including enzyme I, and histidine-containing protein (HPr) are required for the phosphorylation, which leads to the activation of the enzyme.

It catalyses the reaction glycerol + ATP = sn-glycerol 3-phosphate + ADP + H(+). The protein operates within polyol metabolism; glycerol degradation via glycerol kinase pathway; sn-glycerol 3-phosphate from glycerol: step 1/1. Its activity is regulated as follows. Activated by phosphorylation and inhibited by fructose 1,6-bisphosphate (FBP). Key enzyme in the regulation of glycerol uptake and metabolism. Catalyzes the phosphorylation of glycerol to yield sn-glycerol 3-phosphate. This is Glycerol kinase 1 from Lactiplantibacillus plantarum (strain ATCC BAA-793 / NCIMB 8826 / WCFS1) (Lactobacillus plantarum).